We begin with the raw amino-acid sequence, 98 residues long: Putative defensin-like protein 233 (98 aa).

The first 28 residues, 1 to 28 (MGMWCTTLFMVSCVSICLILSHVQEVEA), serve as a signal peptide directing secretion. 4 disulfide bridges follow: Cys-35–Cys-96, Cys-45–Cys-70, Cys-53–Cys-86, and Cys-68–Cys-88.

This sequence belongs to the DEFL family. Expressed at least in stem, root, rosette leaves and flower buds.

The protein resides in the secreted. In Arabidopsis thaliana (Mouse-ear cress), this protein is Putative defensin-like protein 233 (SCRL22).